The sequence spans 1459 residues: Peroxisomal ATPase PEX6 (1459 aa).

Low complexity predominate over residues M1–P13. Disordered regions lie at residues M1–K28 and A316–R410. Over residues R14–N26 the composition is skewed to basic residues. Over residues E327–D348 the composition is skewed to low complexity. The span at S396–T405 shows a compositional bias: polar residues. G1070–T1077 is a binding site for ATP. Residues I1357–E1459 form a disordered region. The segment covering S1391 to K1401 has biased composition (low complexity). Positions G1402–S1413 are enriched in basic residues. Residues G1421–D1443 are compositionally biased toward acidic residues. Basic and acidic residues predominate over residues Y1444 to E1459.

Belongs to the AAA ATPase family. In terms of assembly, interacts with PEX1; forming the PEX1-PEX6 AAA ATPase complex, which is composed of a heterohexamer formed by a trimer of PEX1-PEX6 dimers.

The protein resides in the cytoplasm. It is found in the cytosol. Its subcellular location is the peroxisome membrane. It carries out the reaction ATP + H2O = ADP + phosphate + H(+). Its function is as follows. Component of the PEX1-PEX6 AAA ATPase complex, a protein dislocase complex that mediates the ATP-dependent extraction of the PEX5 receptor from peroxisomal membranes, an essential step for PEX5 recycling. Specifically recognizes PEX5 monoubiquitinated at 'Cys-6', and pulls it out of the peroxisome lumen through the PEX2-PEX10-PEX12 retrotranslocation channel. Extraction by the PEX1-PEX6 AAA ATPase complex is accompanied by unfolding of the TPR repeats and release of bound cargo from PEX5. The chain is Peroxisomal ATPase PEX6 (pex6) from Penicillium chrysogenum (Penicillium notatum).